Here is a 304-residue protein sequence, read N- to C-terminus: GTPase Era (304 aa).

The Era-type G domain maps to 7–178; sequence KCGVVAVLGA…KNALAALMPE (172 aa). The G1 stretch occupies residues 15–22; the sequence is GAPNAGKS. Residue 15–22 participates in GTP binding; that stretch reads GAPNAGKS. Residues 41–45 are G2; it reads QTTRA. The G3 stretch occupies residues 66 to 69; the sequence is DTPG. GTP contacts are provided by residues 66–70 and 128–131; these read DTPGI and NKVD. The G4 stretch occupies residues 128–131; sequence NKVD. The segment at 157-159 is G5; the sequence is VSA. Residues 209-286 enclose the KH type-2 domain; the sequence is LHEELPYDSA…HLFLHVKVDE (78 aa).

The protein belongs to the TRAFAC class TrmE-Era-EngA-EngB-Septin-like GTPase superfamily. Era GTPase family. In terms of assembly, monomer.

The protein localises to the cytoplasm. It is found in the cell inner membrane. Its function is as follows. An essential GTPase that binds both GDP and GTP, with rapid nucleotide exchange. Plays a role in 16S rRNA processing and 30S ribosomal subunit biogenesis and possibly also in cell cycle regulation and energy metabolism. The protein is GTPase Era of Erythrobacter litoralis (strain HTCC2594).